The chain runs to 256 residues: Putative transposase for insertion sequence element IS112 (256 aa).

The protein belongs to the transposase 11 family.

Involved in the transposition of the insertion sequence IS112 which inactivates the SalI restriction-modification system. This chain is Putative transposase for insertion sequence element IS112, found in Streptomyces albus G.